The primary structure comprises 1678 residues: Anaphase-promoting complex subunit 1 (1678 aa).

PC repeat units follow at residues 1089–1116, 1156–1194, 1256–1293, and 1320–1354; these read SAGF…VNRL, GAII…PDFI, GACI…PLSA, and IISL…HANY.

The protein belongs to the APC1 family. The APC/C is composed of at least 10 subunits.

It localises to the nucleus. The protein operates within protein modification; protein ubiquitination. Component of the anaphase promoting complex/cyclosome (APC/C), a cell cycle-regulated E3 ubiquitin-protein ligase complex that controls progression through mitosis and the G1 phase of the cell cycle. The APC/C complex controls several key steps in the cell cycle by mediating ubiquitination and subsequent degradation of target proteins such as cyclins. The APC/C complex is required for the female gametophyte development and is involved in several aspect of development by controlling cell division and cell elongation. Involved in the control of endoreduplication. The polypeptide is Anaphase-promoting complex subunit 1 (APC1) (Arabidopsis thaliana (Mouse-ear cress)).